The sequence spans 584 residues: tRNA-guanine(15) transglycosylase (584 aa).

Aspartate 95 serves as the catalytic Nucleophile. Residues aspartate 130 and glycine 196 each coordinate substrate. Zn(2+) is bound by residues cysteine 279, cysteine 281, and cysteine 284. A PUA domain is found at 507-582; it reads RMRVVVSEEA…RAVKVRRGIS (76 aa).

The protein belongs to the archaeosine tRNA-ribosyltransferase family. Requires Zn(2+) as cofactor.

It catalyses the reaction guanosine(15) in tRNA + 7-cyano-7-deazaguanine = 7-cyano-7-carbaguanosine(15) in tRNA + guanine. It participates in tRNA modification; archaeosine-tRNA biosynthesis. Its function is as follows. Exchanges the guanine residue with 7-cyano-7-deazaguanine (preQ0) at position 15 in the dihydrouridine loop (D-loop) of archaeal tRNAs. This Pyrococcus abyssi (strain GE5 / Orsay) protein is tRNA-guanine(15) transglycosylase.